A 411-amino-acid chain; its full sequence is Dihydrosphingosine 1-phosphate phosphatase C823.11 (411 aa).

Over Met-1–Thr-74 the chain is Lumenal. Residues Leu-75–Tyr-95 form a helical membrane-spanning segment. Over Tyr-96–Asp-99 the chain is Cytoplasmic. A helical membrane pass occupies residues Ile-100–Leu-120. The tract at residues Lys-115–Pro-123 is phosphatase sequence motif I. At Pro-121–Ser-170 the chain is on the lumenal side. Residues Pro-144–His-147 form a phosphatase sequence motif II region. Catalysis depends on His-147, which acts as the Proton donor. Residues Ser-171–Gly-191 form a helical membrane-spanning segment. The tract at residues Gly-191–Asp-202 is phosphatase sequence motif III. Residues Arg-192–Cys-195 are Cytoplasmic-facing. Residues Gly-196–Phe-216 traverse the membrane as a helical segment. His-198 (nucleophile) is an active-site residue. Residues Gln-217 to Thr-233 are Lumenal-facing. Residues Ser-234–Ala-254 traverse the membrane as a helical segment. Residues Glu-255–Cys-259 are Cytoplasmic-facing. The helical transmembrane segment at Leu-260–Ala-280 threads the bilayer. Residues Ser-281 to Asn-293 are Lumenal-facing. A helical transmembrane segment spans residues Ser-294–Trp-314. Over Lys-315 to Arg-387 the chain is Cytoplasmic. Residues Ile-388–Lys-408 form a helical membrane-spanning segment. At Trp-409–Ile-411 the chain is on the lumenal side.

This sequence belongs to the type 2 lipid phosphate phosphatase family.

The protein localises to the endoplasmic reticulum membrane. Functionally, dihydrosphingosine 1-phosphate phosphatase required for efficient ceramide synthesis from exogenous sphingoid bases. Involved in endocytosis and calcium-mediated signaling. The chain is Dihydrosphingosine 1-phosphate phosphatase C823.11 from Schizosaccharomyces pombe (strain 972 / ATCC 24843) (Fission yeast).